Reading from the N-terminus, the 559-residue chain is Chaperonin GroEL 3 (559 aa).

ATP contacts are provided by residues 88 to 92 (DGTTT), glycine 426, and aspartate 507.

The protein belongs to the chaperonin (HSP60) family. Forms a cylinder of 14 subunits composed of two heptameric rings stacked back-to-back. Interacts with the co-chaperonin GroES.

The protein resides in the cytoplasm. It carries out the reaction ATP + H2O + a folded polypeptide = ADP + phosphate + an unfolded polypeptide.. Its function is as follows. Together with its co-chaperonin GroES, plays an essential role in assisting protein folding. The GroEL-GroES system forms a nano-cage that allows encapsulation of the non-native substrate proteins and provides a physical environment optimized to promote and accelerate protein folding. The sequence is that of Chaperonin GroEL 3 from Methylococcus capsulatus (strain ATCC 33009 / NCIMB 11132 / Bath).